The primary structure comprises 240 residues: Probable transcriptional regulatory protein MADE_1004275 (240 aa).

This sequence belongs to the TACO1 family.

It is found in the cytoplasm. This chain is Probable transcriptional regulatory protein MADE_1004275, found in Alteromonas mediterranea (strain DSM 17117 / CIP 110805 / LMG 28347 / Deep ecotype).